We begin with the raw amino-acid sequence, 277 residues long: Methylglyoxal reductase DkgA (277 aa).

Tyr51 (proton donor) is an active-site residue. His107 serves as a coordination point for substrate. 187 to 241 contacts NADP(+); that stretch reads SPLAQGGKGVFDQEIIRKLAQQYNKTPAQIVIRWHLDSGLIVIPKSVTPARIREN.

Belongs to the aldo/keto reductase family. As to quaternary structure, monomer.

Its subcellular location is the cytoplasm. It catalyses the reaction hydroxyacetone + NADP(+) = methylglyoxal + NADPH + H(+). In terms of biological role, aldo-keto reductase that significantly contributes to cellular methylglyoxal detoxification by catalyzing the NADPH-dependent conversion of methylglyoxal to acetol. The polypeptide is Methylglyoxal reductase DkgA (Yersinia pestis).